Here is a 303-residue protein sequence, read N- to C-terminus: Phosphoglycerate mutase 3 (303 aa).

Substrate contacts are provided by residues arginine 13–asparagine 20, cysteine 26–glycine 27, arginine 70, glutamate 120–tyrosine 123, lysine 131, and arginine 147–arginine 148. Histidine 14 (tele-phosphohistidine intermediate) is an active-site residue. Glutamate 120 functions as the Proton donor/acceptor in the catalytic mechanism. The disordered stretch occupies residues asparagine 168–proline 198. Residues aspartate 177–proline 198 are compositionally biased toward basic and acidic residues. A substrate-binding site is contributed by glycine 236–serine 237.

The protein belongs to the phosphoglycerate mutase family. BPG-dependent PGAM subfamily.

The enzyme catalyses (2R)-2-phosphoglycerate = (2R)-3-phosphoglycerate. Its pathway is carbohydrate degradation; glycolysis; pyruvate from D-glyceraldehyde 3-phosphate: step 3/5. Its function is as follows. Could be non-functional. This is Phosphoglycerate mutase 3 (GPM3) from Saccharomyces cerevisiae (strain ATCC 204508 / S288c) (Baker's yeast).